A 419-amino-acid chain; its full sequence is CinA-like protein (419 aa).

It belongs to the CinA family.

This chain is CinA-like protein, found in Leptospira borgpetersenii serovar Hardjo-bovis (strain JB197).